The primary structure comprises 320 residues: Zinc finger protein 330 (320 aa).

Residues 1–23 (MPKKKTGARKKAENRREREKQLR) are disordered. Positions 3–11 (KKKTGARKK) match the Nuclear localization signal motif. The segment covering 10–22 (KKAENRREREKQL) has biased composition (basic and acidic residues). C4-type zinc fingers lie at residues 42 to 58 (CDKC…CYFC), 67 to 104 (CAQC…CDFC), 129 to 149 (CVEC…CSFC), and 175 to 189 (CVSC…CLRC). 2 disordered regions span residues 206 to 250 (EKGK…ASGY) and 264 to 303 (GASY…TNLN). Residues 216 to 225 (CGHETQETKD) show a composition bias toward basic and acidic residues. Positions 269-287 (DEEEDEYEAEDDEEEEDEG) are enriched in acidic residues. Position 291 is a phosphoserine (Ser291).

Belongs to the NOA36 family.

The protein resides in the nucleus. It is found in the nucleolus. Its subcellular location is the chromosome. It localises to the centromere. This Bos taurus (Bovine) protein is Zinc finger protein 330 (ZNF330).